The primary structure comprises 451 residues: UDP-N-acetylmuramoylalanine--D-glutamate ligase (451 aa).

Position 119–125 (119–125 (GSNGKTT)) interacts with ATP.

Belongs to the MurCDEF family.

The protein resides in the cytoplasm. The enzyme catalyses UDP-N-acetyl-alpha-D-muramoyl-L-alanine + D-glutamate + ATP = UDP-N-acetyl-alpha-D-muramoyl-L-alanyl-D-glutamate + ADP + phosphate + H(+). It participates in cell wall biogenesis; peptidoglycan biosynthesis. In terms of biological role, cell wall formation. Catalyzes the addition of glutamate to the nucleotide precursor UDP-N-acetylmuramoyl-L-alanine (UMA). This chain is UDP-N-acetylmuramoylalanine--D-glutamate ligase, found in Streptococcus agalactiae serotype III (strain NEM316).